A 1107-amino-acid polypeptide reads, in one-letter code: OTU domain-containing protein 4 (1107 aa).

The residue at position 1 (Met1) is an N-acetylmethionine. An OTU domain is found at 34–155 (LYRKLVAKDG…GNHYDIVYPI (122 aa)). Positions 39-45 (VAKDGSC) are cys-loop. Residue Asp42 is part of the active site. The Nucleophile role is filled by Cys45. The variable-loop stretch occupies residues 94–104 (LENPQEWVGQV). Tyr120 is modified (phosphotyrosine). Residues Ser126 and Ser128 each carry the phosphoserine modification. At Thr131 the chain carries Phosphothreonine. Residues 143–148 (FSNGNH) are his-loop. His148 is an active-site residue. A phosphoserine mark is found at Ser166, Ser199, Ser202, and Ser204. A compositionally biased stretch (acidic residues) spans 195-206 (EESNSEISDSED). Disordered regions lie at residues 195-239 (EESN…SADL) and 322-431 (KHTP…DFDH). Polar residues predominate over residues 226–236 (GSENPKNNGNS). Ser340 bears the Phosphoserine mark. Positions 392-403 (SSHSTGSQSQKS) are enriched in low complexity. Residues 419–431 (RKPDRERAEDFDH) show a composition bias toward basic and acidic residues. Phosphotyrosine is present on Tyr438. At Ser442 the chain carries Phosphoserine. Phosphotyrosine is present on Tyr459. Residues 470-568 (PALSSSSVSQ…KPAEHIPLSN (99 aa)) are disordered. Positions 473–486 (SSSSVSQSPSQNSN) are enriched in low complexity. A compositionally biased stretch (basic and acidic residues) spans 495–528 (HARDRKGSMRRADAEERKDKDSLRGHTHVDKKPE). Phosphoserine occurs at positions 544 and 895. A disordered region spans residues 918–1107 (LSAASVSSKH…MGDGHRGQHT (190 aa)). Residues 963–994 (NREREPGSAEPEPKRTIQSLKEKPEKVKDPKT) are compositionally biased toward basic and acidic residues. A phosphoserine mark is found at Ser1000, Ser1005, Ser1016, and Ser1017. Residues 1032-1041 (SKQFYNQTYG) are compositionally biased toward polar residues. Residue Ser1042 is modified to Phosphoserine. Basic and acidic residues-rich tracts occupy residues 1060 to 1079 (VRGEESWKGQPNRSRDEGYQ) and 1089 to 1107 (YRGDRRRSGMGDGHRGQHT).

As to quaternary structure, interacts with MYD88; the interaction is direct. Interacts with ALKBH3; the interaction is direct. Interacts with USP7; the interaction is direct. Interacts with USP9X; the interaction is direct. Phosphorylation at Ser-202 and Ser-204 activates 'Lys-63'-specific deubiquitinase activity. Induced upon stimulation with IL1B.

The protein resides in the cytoplasm. Its subcellular location is the nucleus. It catalyses the reaction Thiol-dependent hydrolysis of ester, thioester, amide, peptide and isopeptide bonds formed by the C-terminal Gly of ubiquitin (a 76-residue protein attached to proteins as an intracellular targeting signal).. With respect to regulation, phosphorylation on Ser-202 and Ser-204 induces 'Lys-63'-specific deubiquitinase activity. Deubiquitinase which hydrolyzes the isopeptide bond between the ubiquitin C-terminus and the lysine epsilon-amino group of the target protein. May negatively regulate inflammatory and pathogen recognition signaling in innate immune response. Upon phosphorylation at Ser-202 and Ser-204 residues, via IL-1 receptor and Toll-like receptor signaling pathway, specifically deubiquitinates 'Lys-63'-polyubiquitinated MYD88 adapter protein triggering down-regulation of NF-kappa-B-dependent transcription of inflammatory mediators. Independently of the catalytic activity, acts as a scaffold for alternative deubiquitinases to assemble specific deubiquitinase-substrate complexes. Associates with USP7 and USP9X deubiquitinases to stabilize alkylation repair enzyme ALKBH3, thereby promoting the repair of alkylated DNA lesions. The protein is OTU domain-containing protein 4 of Mus musculus (Mouse).